A 378-amino-acid chain; its full sequence is Mitogen-activated protein kinase mpkC (378 aa).

Residues 20–300 (YVNPQPIGMG…AQDALRHPYL (281 aa)) form the Protein kinase domain. Residues 26-34 (IGMGSFGLV) and Lys49 each bind ATP. Asp141 serves as the catalytic Proton acceptor.

The protein belongs to the protein kinase superfamily. Ser/Thr protein kinase family. MAP kinase subfamily. The cofactor is Mg(2+).

It is found in the nucleus. It carries out the reaction L-seryl-[protein] + ATP = O-phospho-L-seryl-[protein] + ADP + H(+). It catalyses the reaction L-threonyl-[protein] + ATP = O-phospho-L-threonyl-[protein] + ADP + H(+). Activated by threonine and tyrosine phosphorylation. In terms of biological role, mitogen-activated protein kinase (MAPK), part of the high-osmolarity glycerol (HOG) pathway. With sakA, plays a role in the osmotic and oxidative stress responses. Involved in paradoxical growth, the cell wall integrity (CWI) pathway and biofilm formation. SakA and mpkC collaborate during virulence and mpkC could act by modulating sakA activity upon exposure to several types of stresses and during cell wall biosynthesis. The sequence is that of Mitogen-activated protein kinase mpkC from Aspergillus fumigatus (strain CBS 144.89 / FGSC A1163 / CEA10) (Neosartorya fumigata).